We begin with the raw amino-acid sequence, 901 residues long: HTH-type transcriptional regulator MalT (901 aa).

39–46 serves as a coordination point for ATP; sequence SPAGYGKT. In terms of domain architecture, HTH luxR-type spans 829-894; sequence ELIRTSPLTQ…DAVQHAQQLL (66 aa). The H-T-H motif DNA-binding region spans 853-872; sequence NEQIAGELAVAATTIKTHIR.

The protein belongs to the MalT family. As to quaternary structure, monomer in solution. Oligomerizes to an active state in the presence of the positive effectors ATP and maltotriose.

With respect to regulation, activated by ATP and maltotriose, which are both required for DNA binding. Functionally, positively regulates the transcription of the maltose regulon whose gene products are responsible for uptake and catabolism of malto-oligosaccharides. Specifically binds to the promoter region of its target genes, recognizing a short DNA motif called the MalT box. The polypeptide is HTH-type transcriptional regulator MalT (Salmonella choleraesuis (strain SC-B67)).